Here is a 256-residue protein sequence, read N- to C-terminus: Ribosomal RNA large subunit methyltransferase E (256 aa).

Residues G48, W50, D68, D86, and D111 each contribute to the S-adenosyl-L-methionine site. The Proton acceptor role is filled by K151. The 59-residue stretch at 198 to 256 (PVSPGDELDATVVDIGSEGDGIIKIDGYTLFVPGVENGDSVRVRVTDLKSNVGFAEVIE) folds into the TRAM domain.

This sequence belongs to the class I-like SAM-binding methyltransferase superfamily. RNA methyltransferase RlmE family.

Its subcellular location is the cytoplasm. The enzyme catalyses uridine(2552) in 23S rRNA + S-adenosyl-L-methionine = 2'-O-methyluridine(2552) in 23S rRNA + S-adenosyl-L-homocysteine + H(+). In terms of biological role, specifically methylates the uridine in position 2552 of 23S rRNA at the 2'-O position of the ribose in the fully assembled 50S ribosomal subunit. The sequence is that of Ribosomal RNA large subunit methyltransferase E from Haloquadratum walsbyi (strain DSM 16790 / HBSQ001).